A 501-amino-acid chain; its full sequence is Glycerol kinase (501 aa).

Threonine 12 is an ADP binding site. Residues threonine 12, threonine 13, and serine 14 each coordinate ATP. Threonine 12 lines the sn-glycerol 3-phosphate pocket. An ADP-binding site is contributed by arginine 16. Positions 82, 83, 134, and 244 each coordinate sn-glycerol 3-phosphate. Positions 82, 83, 134, 244, and 245 each coordinate glycerol. Positions 266 and 310 each coordinate ADP. Threonine 266, glycine 310, glutamine 314, and glycine 411 together coordinate ATP. 2 residues coordinate ADP: glycine 411 and asparagine 415.

It belongs to the FGGY kinase family.

It catalyses the reaction glycerol + ATP = sn-glycerol 3-phosphate + ADP + H(+). Its pathway is polyol metabolism; glycerol degradation via glycerol kinase pathway; sn-glycerol 3-phosphate from glycerol: step 1/1. With respect to regulation, inhibited by fructose 1,6-bisphosphate (FBP). Key enzyme in the regulation of glycerol uptake and metabolism. Catalyzes the phosphorylation of glycerol to yield sn-glycerol 3-phosphate. The chain is Glycerol kinase from Methylobacterium radiotolerans (strain ATCC 27329 / DSM 1819 / JCM 2831 / NBRC 15690 / NCIMB 10815 / 0-1).